The chain runs to 630 residues: Alpha-1,3-mannosyltransferase MNT3 (630 aa).

The Cytoplasmic segment spans residues methionine 1–arginine 14. Residues leucine 15–alanine 31 traverse the membrane as a helical; Signal-anchor for type II membrane protein segment. The Lumenal segment spans residues serine 32 to asparagine 630. N-linked (GlcNAc...) asparagine glycosylation is found at asparagine 34 and asparagine 168.

Belongs to the MNN1/MNT family.

It is found in the golgi apparatus membrane. It functions in the pathway protein modification; protein glycosylation. In terms of biological role, mannosyltransferase involved in adding the 4th and 5th mannose residues of O-linked glycans. This chain is Alpha-1,3-mannosyltransferase MNT3 (MNT3), found in Saccharomyces cerevisiae (strain ATCC 204508 / S288c) (Baker's yeast).